The primary structure comprises 113 residues: Putative pterin-4-alpha-carbinolamine dehydratase (113 aa).

Belongs to the pterin-4-alpha-carbinolamine dehydratase family.

The catalysed reaction is (4aS,6R)-4a-hydroxy-L-erythro-5,6,7,8-tetrahydrobiopterin = (6R)-L-erythro-6,7-dihydrobiopterin + H2O. The protein is Putative pterin-4-alpha-carbinolamine dehydratase of Bordetella bronchiseptica (strain ATCC BAA-588 / NCTC 13252 / RB50) (Alcaligenes bronchisepticus).